Here is a 115-residue protein sequence, read N- to C-terminus: U3-lycotoxin-Ls1c (115 aa).

The signal sequence occupies residues 1–20; sequence MKFVLLFGVLLVTLFSYSSA. Residues 21 to 44 constitute a propeptide that is removed on maturation; it reads EMLDDFDQADEDELLSLIEKEEAR. 4 disulfides stabilise this stretch: Cys-48-Cys-63, Cys-55-Cys-72, Cys-62-Cys-87, and Cys-74-Cys-85.

The protein belongs to the neurotoxin 19 (CSTX) family. 01 subfamily. Expressed by the venom gland.

The protein localises to the secreted. The chain is U3-lycotoxin-Ls1c from Lycosa singoriensis (Wolf spider).